Reading from the N-terminus, the 470-residue chain is MKSKIYFKFTTEKDEIDGVYKDGLNIYKTSNTITNISSDNKKEGITYLDPSKSARCLYRDAKYLRIVRLHKDTVSVKQDYLNDNGRFWADKLYLGKRFELSDPFTIMYMIKMGYNVRERDDYMLEWACAGNFTEVARYLLKIGANPGTNKYACFESAVRNGNYDMVKLLLENIPGSDKFYYKMLEVFKNKSRYCGPEISKLFFNYVRDCDIDYIIRHDTQKLYVLEDTEFVKSLVGRGLGIGKFIDRTEPKFDKYYLECVVRGFLDTMKYFDTIDTTIVTRNQQQLIEKAVLSKNLDVFKYLEQNIDVGPMIDDLILKCMKIDLFVFVKYMIEKYNVINVLDTNKLIENISLCCNMEMIEYMTNLTGISIPETQGLLTNACQYNNSELVKYLLEKGANVNEFNGKPLREAIKNNNKDIIKNLMDYSPDISLDNYAAIRESFATFPEIAKKLAVGISIEKLHEIIFDQKIS.

ANK repeat units lie at residues 119–148 (RDDY…NPGT), 149–178 (NKYA…GSDK), 372–401 (ETQG…NVNE), and 403–431 (NGKP…DISL).

The protein is Putative ankyrin repeat protein L279 of Acanthamoeba polyphaga (Amoeba).